A 513-amino-acid polypeptide reads, in one-letter code: Acetylcholine receptor subunit delta (513 aa).

Residues 1-18 (MAVLLALFGALVLSGGLC) form the signal peptide. Topologically, residues 19-244 (VNQEERLIHH…ITFYLIIKRK (226 aa)) are extracellular. Residues Asn88 and Asn161 are each glycosylated (N-linked (GlcNAc...) asparagine). Cys148 and Cys162 are disulfide-bonded. A run of 3 helical transmembrane segments spans residues 245 to 269 (PLFY…VFYL), 277 to 295 (MTLV…LLVS), and 311 to 332 (YLLF…VLNF). The Cytoplasmic segment spans residues 333–467 (HFRTPSTHVM…WNRVARTLDR (135 aa)). Tyr388 carries the phosphotyrosine; by Tyr-kinases modification. Residues 468-490 (LCLFLITPMLVVGTLWIFLMGIY) form a helical membrane-spanning segment.

The protein belongs to the ligand-gated ion channel (TC 1.A.9) family. Acetylcholine receptor (TC 1.A.9.1) subfamily. In terms of assembly, pentamer of two alpha chains, and one each of the beta, delta, and gamma chains.

It localises to the postsynaptic cell membrane. The protein localises to the cell membrane. The catalysed reaction is K(+)(in) = K(+)(out). The enzyme catalyses Na(+)(in) = Na(+)(out). After binding acetylcholine, the AChR responds by an extensive change in conformation that affects all subunits and leads to opening of an ion-conducting channel across the plasma membrane. The chain is Acetylcholine receptor subunit delta (CHRND) from Gallus gallus (Chicken).